The sequence spans 21 residues: GMASKAGSIVGKIAKIALGAL.

At leucine 21 the chain carries Leucine amide.

Expressed by the skin glands.

Its subcellular location is the secreted. Its function is as follows. Has antimicrobial activity against Gram-negative bacterium E.coli ATCC 25922 (MIC=25 uM), Gram-positive bacterium S.auerus ATCC 25923 (MIC=50 uM) and against fungus C.albicans ATCC 90028 (MIC=25 uM). Has some hemolytic activity against human erythrocytes at high concentration. The sequence is that of Peptide PGLa-B2 from Xenopus borealis (Kenyan clawed frog).